A 171-amino-acid chain; its full sequence is NADH-quinone oxidoreductase subunit B (171 aa).

Positions 39, 40, 105, and 134 each coordinate [4Fe-4S] cluster.

The protein belongs to the complex I 20 kDa subunit family. In terms of assembly, NDH-1 is composed of 14 different subunits. Subunits NuoB, C, D, E, F, and G constitute the peripheral sector of the complex. [4Fe-4S] cluster serves as cofactor.

It is found in the cell inner membrane. It carries out the reaction a quinone + NADH + 5 H(+)(in) = a quinol + NAD(+) + 4 H(+)(out). Functionally, NDH-1 shuttles electrons from NADH, via FMN and iron-sulfur (Fe-S) centers, to quinones in the respiratory chain. The immediate electron acceptor for the enzyme in this species is believed to be ubiquinone. Couples the redox reaction to proton translocation (for every two electrons transferred, four hydrogen ions are translocated across the cytoplasmic membrane), and thus conserves the redox energy in a proton gradient. The protein is NADH-quinone oxidoreductase subunit B of Aliarcobacter butzleri (strain RM4018) (Arcobacter butzleri).